A 215-amino-acid chain; its full sequence is Pyrrolidone-carboxylate peptidase (215 aa).

Active-site residues include Glu80, Cys143, and His167.

It belongs to the peptidase C15 family. Homotetramer.

It is found in the cytoplasm. The enzyme catalyses Release of an N-terminal pyroglutamyl group from a polypeptide, the second amino acid generally not being Pro.. Its function is as follows. Removes 5-oxoproline from various penultimate amino acid residues except L-proline. This Brevibacillus brevis (strain 47 / JCM 6285 / NBRC 100599) protein is Pyrrolidone-carboxylate peptidase.